A 695-amino-acid chain; its full sequence is C6 finger domain transcription factor nscR (695 aa).

Residues 17 to 43 (CELCRERKVKCDKLDPCTNCASAGVVC) constitute a DNA-binding region (zn(2)-C6 fungal-type). Residues 101–113 (SMRSSASQSSNQD) show a composition bias toward low complexity. The interval 101 to 146 (SMRSSASQSSNQDQESRDAIESISNETEDASAPTPDSSRMPLGDGG) is disordered.

The protein resides in the nucleus. Its function is as follows. Transcription factor that specifically regulates the neosartoricin B biosynthesis gene cluster. This chain is C6 finger domain transcription factor nscR, found in Arthroderma otae (strain ATCC MYA-4605 / CBS 113480) (Microsporum canis).